The chain runs to 117 residues: Non-specific lipid-transfer protein (117 aa).

Positions 1–26 (MACSAMTKLALVVALCMVVSVPIAQA) are cleaved as a signal peptide. Intrachain disulfides connect C29-C76, C39-C53, C54-C99, and C74-C113.

Belongs to the plant LTP family.

Functionally, plant non-specific lipid-transfer proteins transfer phospholipids as well as galactolipids across membranes. May play a role in wax or cutin deposition in the cell walls of expanding epidermal cells and certain secretory tissues. This chain is Non-specific lipid-transfer protein, found in Prunus avium (Cherry).